Reading from the N-terminus, the 146-residue chain is uncharacterized protein (146 aa).

An HTH marR-type domain is found at 1–137 (MLSQEFFNSF…TINVMNQIHE (137 aa)).

This is an uncharacterized protein from Staphylococcus aureus (strain N315).